A 545-amino-acid polypeptide reads, in one-letter code: Capsular polysaccharide phosphotransferase SacB (545 aa).

It belongs to the stealth family.

May be the polymerase that links individual UDP-N-acetyl-D-mannosamine monomers. In serotype A the capsule is composed of repeated units of (alpha 1-6)-linked N-acetyl-D-mannosamine-1-phosphate. This is Capsular polysaccharide phosphotransferase SacB (sacB) from Neisseria meningitidis serogroup A.